The following is a 235-amino-acid chain: Ribitol-5-phosphate cytidylyltransferase (235 aa).

Residues 7–10 (LAGG), 82–88 (GADRNTS), and Ser113 each bind CTP.

The protein belongs to the IspD/TarI cytidylyltransferase family. TarI subfamily.

It carries out the reaction D-ribitol 5-phosphate + CTP + H(+) = CDP-L-ribitol + diphosphate. It participates in cell wall biogenesis; poly(ribitol phosphate) teichoic acid biosynthesis. Catalyzes the transfer of the cytidylyl group of CTP to D-ribitol 5-phosphate. This chain is Ribitol-5-phosphate cytidylyltransferase, found in Streptococcus pneumoniae (strain Hungary19A-6).